We begin with the raw amino-acid sequence, 322 residues long: Transcriptional activator protein Pur-alpha (322 aa).

A disordered region spans residues 1–55 (MADRDSGSEQGGAALGSGGSLGHPGSGSGSGGGGGGGGGGGGSGGGGGGAPGGLQ). Alanine 2 carries the post-translational modification N-acetylalanine. The segment covering 9-52 (EQGGAALGSGGSLGHPGSGSGSGGGGGGGGGGGGSGGGGGGAPG) has biased composition (gly residues). The PUR repeat I repeat unit spans residues 60–125 (ELASKRVDIQ…DFIEHYAQLG (66 aa)). The PUR repeat II repeat unit spans residues 142–213 (ALKSEFLVRE…KLIDDYGVEE (72 aa)). At serine 182 the chain carries Phosphoserine. Residues 215–281 (PAELPEGTSL…CKYSEEMKKI (67 aa)) form a PUR repeat III repeat. A compositionally biased stretch (low complexity) spans 295 to 314 (LHQQQQQQQEETAAATLLLQ). The interval 295-322 (LHQQQQQQQEETAAATLLLQGEEEGEED) is disordered.

The protein belongs to the PUR DNA-binding protein family. In terms of assembly, homodimer, heterodimer with PURB and heterotrimer with PURB and YBX1/Y-box protein 1. Interacts with FMR1; this interaction occurs in association with polyribosome.

It localises to the nucleus. Functionally, this is a probable transcription activator that specifically binds the purine-rich single strand of the PUR element located upstream of the MYC gene. May play a role in the initiation of DNA replication and in recombination. This is Transcriptional activator protein Pur-alpha (PURA) from Homo sapiens (Human).